The sequence spans 337 residues: Succinylglutamate desuccinylase (337 aa).

Positions 59, 62, and 152 each coordinate Zn(2+). The active site involves Glu-216.

The protein belongs to the AspA/AstE family. Succinylglutamate desuccinylase subfamily. Requires Zn(2+) as cofactor.

The catalysed reaction is N-succinyl-L-glutamate + H2O = L-glutamate + succinate. It functions in the pathway amino-acid degradation; L-arginine degradation via AST pathway; L-glutamate and succinate from L-arginine: step 5/5. In terms of biological role, transforms N(2)-succinylglutamate into succinate and glutamate. This is Succinylglutamate desuccinylase from Ectopseudomonas mendocina (strain ymp) (Pseudomonas mendocina).